We begin with the raw amino-acid sequence, 248 residues long: Coenzyme F420:L-glutamate ligase (248 aa).

Residues 15–18 (IPLI), 45–46 (ET), and lysine 50 contribute to the GTP site. Aspartate 115 is an a divalent metal cation binding site. Asparagine 118 is a GTP binding site. 3 residues coordinate a divalent metal cation: aspartate 155, serine 156, and glutamine 213. Position 211-218 (211-218 (MGQSNEGI)) interacts with GTP.

This sequence belongs to the CofE family. Homodimer. It depends on Mg(2+) as a cofactor. Requires Mn(2+) as cofactor. K(+) serves as cofactor.

The enzyme catalyses oxidized coenzyme F420-0 + GTP + L-glutamate = oxidized coenzyme F420-1 + GDP + phosphate + H(+). The catalysed reaction is oxidized coenzyme F420-1 + GTP + L-glutamate = oxidized coenzyme F420-2 + GDP + phosphate + H(+). The protein operates within cofactor biosynthesis; coenzyme F420 biosynthesis. Its function is as follows. Catalyzes the GTP-dependent successive addition of two or more gamma-linked L-glutamates to the L-lactyl phosphodiester of 7,8-didemethyl-8-hydroxy-5-deazariboflavin (F420-0) to form coenzyme F420-0-glutamyl-glutamate (F420-2) or polyglutamated F420 derivatives. The chain is Coenzyme F420:L-glutamate ligase from Methanococcus maripaludis (strain C7 / ATCC BAA-1331).